A 313-amino-acid polypeptide reads, in one-letter code: Porphobilinogen deaminase (313 aa).

An S-(dipyrrolylmethanemethyl)cysteine modification is found at C242.

The protein belongs to the HMBS family. As to quaternary structure, monomer. The cofactor is dipyrromethane.

It carries out the reaction 4 porphobilinogen + H2O = hydroxymethylbilane + 4 NH4(+). Its pathway is porphyrin-containing compound metabolism; protoporphyrin-IX biosynthesis; coproporphyrinogen-III from 5-aminolevulinate: step 2/4. Its function is as follows. Tetrapolymerization of the monopyrrole PBG into the hydroxymethylbilane pre-uroporphyrinogen in several discrete steps. In Erwinia tasmaniensis (strain DSM 17950 / CFBP 7177 / CIP 109463 / NCPPB 4357 / Et1/99), this protein is Porphobilinogen deaminase.